We begin with the raw amino-acid sequence, 269 residues long: Monofunctional glycosyltransferase (269 aa).

A helical membrane pass occupies residues 46-66 (ILLTILIIIALFIGIMYFLST).

This sequence belongs to the glycosyltransferase 51 family.

The protein resides in the cell membrane. It catalyses the reaction [GlcNAc-(1-&gt;4)-Mur2Ac(oyl-L-Ala-gamma-D-Glu-L-Lys-D-Ala-D-Ala)](n)-di-trans,octa-cis-undecaprenyl diphosphate + beta-D-GlcNAc-(1-&gt;4)-Mur2Ac(oyl-L-Ala-gamma-D-Glu-L-Lys-D-Ala-D-Ala)-di-trans,octa-cis-undecaprenyl diphosphate = [GlcNAc-(1-&gt;4)-Mur2Ac(oyl-L-Ala-gamma-D-Glu-L-Lys-D-Ala-D-Ala)](n+1)-di-trans,octa-cis-undecaprenyl diphosphate + di-trans,octa-cis-undecaprenyl diphosphate + H(+). The protein operates within cell wall biogenesis; peptidoglycan biosynthesis. Peptidoglycan polymerase that catalyzes glycan chain elongation using lipid-linked disaccharide-pentapeptide as the substrate. This is Monofunctional glycosyltransferase from Staphylococcus aureus (strain Newman).